The primary structure comprises 83 residues: MKTLLLTLVVVTIVCLDLGYTLKCHNTQLPFIYKTCPEGKNLCFKATLKKFPLKFPVKRGCADNCPKNSALLKYVCCSTDKCN.

The N-terminal stretch at 1-21 is a signal peptide; sequence MKTLLLTLVVVTIVCLDLGYT. Intrachain disulfides connect C24–C43, C36–C61, C65–C76, and C77–C82.

Belongs to the three-finger toxin family. Short-chain subfamily. Orphan group XV sub-subfamily. As to expression, expressed by the venom gland.

It is found in the secreted. The protein localises to the target cell membrane. Has low cytotoxic activity. This Naja atra (Chinese cobra) protein is Cardiotoxin 7''.